A 458-amino-acid polypeptide reads, in one-letter code: Transcription factor bHLH10 (458 aa).

The segment at 1–49 (MEEERESLYEEMGCFDPNTPAEVTVESSFSQAEPPPPPPQVLVAGSTSN) is disordered. Residues 243–292 (SRKSRTSPTERERRVHFNDRFFDLKNLIPNPTKIDRASIVGEAIDYIKEL) form the bHLH domain. The interval 315–338 (KRARVGEGGGGEDQEEEEDTVNYK) is disordered. Over residues 324 to 334 (GGEDQEEEEDT) the composition is skewed to acidic residues.

As to quaternary structure, homodimer.

The protein localises to the nucleus. In Arabidopsis thaliana (Mouse-ear cress), this protein is Transcription factor bHLH10 (BHLH10).